The primary structure comprises 894 residues: Probable cytoplasmic aconitate hydratase (894 aa).

Substrate-binding positions include Gln87 and 207 to 209; that span reads DSH. Positions 438, 504, and 507 each coordinate [4Fe-4S] cluster. Residues Arg537, Arg542, and 781–782 each bind substrate; that span reads SR.

It belongs to the aconitase/IPM isomerase family. Requires [4Fe-4S] cluster as cofactor.

Its subcellular location is the cytoplasm. It is found in the cytosol. It catalyses the reaction citrate = D-threo-isocitrate. Functionally, catalyzes the isomerization of citrate to isocitrate via cis-aconitate. In Dictyostelium discoideum (Social amoeba), this protein is Probable cytoplasmic aconitate hydratase (aco1).